Here is a 233-residue protein sequence, read N- to C-terminus: 5'-methylthioadenosine/S-adenosylhomocysteine nucleosidase (233 aa).

Residue Glu12 is the Proton acceptor of the active site. Substrate contacts are provided by residues Gly78, Ile152, and 173–174 (ME). The active-site Proton donor is Asp197.

This sequence belongs to the PNP/UDP phosphorylase family. MtnN subfamily. As to quaternary structure, homodimer.

It carries out the reaction S-adenosyl-L-homocysteine + H2O = S-(5-deoxy-D-ribos-5-yl)-L-homocysteine + adenine. The enzyme catalyses S-methyl-5'-thioadenosine + H2O = 5-(methylsulfanyl)-D-ribose + adenine. It catalyses the reaction 5'-deoxyadenosine + H2O = 5-deoxy-D-ribose + adenine. The protein operates within amino-acid biosynthesis; L-methionine biosynthesis via salvage pathway; S-methyl-5-thio-alpha-D-ribose 1-phosphate from S-methyl-5'-thioadenosine (hydrolase route): step 1/2. Functionally, catalyzes the irreversible cleavage of the glycosidic bond in both 5'-methylthioadenosine (MTA) and S-adenosylhomocysteine (SAH/AdoHcy) to adenine and the corresponding thioribose, 5'-methylthioribose and S-ribosylhomocysteine, respectively. Also cleaves 5'-deoxyadenosine, a toxic by-product of radical S-adenosylmethionine (SAM) enzymes, into 5-deoxyribose and adenine. Thus, is required for in vivo function of the radical SAM enzymes biotin synthase and lipoic acid synthase, that are inhibited by 5'-deoxyadenosine accumulation. The polypeptide is 5'-methylthioadenosine/S-adenosylhomocysteine nucleosidase (Yersinia enterocolitica serotype O:8 / biotype 1B (strain NCTC 13174 / 8081)).